The chain runs to 406 residues: uncharacterized protein (406 aa).

The span at 136 to 153 (SQKNWGSEKNWNSPSQGP) shows a compositional bias: polar residues. The interval 136–157 (SQKNWGSEKNWNSPSQGPASRE) is disordered.

This is an uncharacterized protein from Rattus norvegicus (Rat).